A 241-amino-acid polypeptide reads, in one-letter code: Ribonuclease PH (241 aa).

Phosphate-binding positions include R87 and 125–127 (GTR).

This sequence belongs to the RNase PH family. Homohexameric ring arranged as a trimer of dimers.

The enzyme catalyses tRNA(n+1) + phosphate = tRNA(n) + a ribonucleoside 5'-diphosphate. Its function is as follows. Phosphorolytic 3'-5' exoribonuclease that plays an important role in tRNA 3'-end maturation. Removes nucleotide residues following the 3'-CCA terminus of tRNAs; can also add nucleotides to the ends of RNA molecules by using nucleoside diphosphates as substrates, but this may not be physiologically important. Probably plays a role in initiation of 16S rRNA degradation (leading to ribosome degradation) during starvation. The protein is Ribonuclease PH of Salinispora tropica (strain ATCC BAA-916 / DSM 44818 / JCM 13857 / NBRC 105044 / CNB-440).